The primary structure comprises 103 residues: Large ribosomal subunit protein bL21 (103 aa).

It belongs to the bacterial ribosomal protein bL21 family. Part of the 50S ribosomal subunit. Contacts protein L20.

Its function is as follows. This protein binds to 23S rRNA in the presence of protein L20. This chain is Large ribosomal subunit protein bL21, found in Shewanella amazonensis (strain ATCC BAA-1098 / SB2B).